The following is a 216-amino-acid chain: ATP-dependent Clp protease proteolytic subunit (216 aa).

Ser-101 acts as the Nucleophile in catalysis. The active site involves His-126.

It belongs to the peptidase S14 family. As to quaternary structure, component of the chloroplastic Clp protease core complex.

Its subcellular location is the plastid. It is found in the chloroplast stroma. The enzyme catalyses Hydrolysis of proteins to small peptides in the presence of ATP and magnesium. alpha-casein is the usual test substrate. In the absence of ATP, only oligopeptides shorter than five residues are hydrolyzed (such as succinyl-Leu-Tyr-|-NHMec, and Leu-Tyr-Leu-|-Tyr-Trp, in which cleavage of the -Tyr-|-Leu- and -Tyr-|-Trp bonds also occurs).. Functionally, cleaves peptides in various proteins in a process that requires ATP hydrolysis. Has a chymotrypsin-like activity. Plays a major role in the degradation of misfolded proteins. This Triticum aestivum (Wheat) protein is ATP-dependent Clp protease proteolytic subunit.